Consider the following 78-residue polypeptide: MNNQYIRREVFCCGTCHELKSFWEKEISKQTFYRELEEDRQERSALKKLREEWRQRLERRLRMLDNPVEKEKPAHTAD.

The protein belongs to the FAM240 family.

This is Protein FAM240B from Homo sapiens (Human).